A 129-amino-acid polypeptide reads, in one-letter code: Histone H2B.1 (129 aa).

Residues 1-17 are compositionally biased toward basic and acidic residues; the sequence is MSAEKKPASKAPAEKKP. Residues 1-35 form a disordered region; sequence MSAEKKPASKAPAEKKPAAKKTAPSADGKKRTKAR. Lysine 5 and lysine 6 each carry N6-acetyllysine; alternate. Residues lysine 5 and lysine 6 each participate in a glycyl lysine isopeptide (Lys-Gly) (interchain with G-Cter in SUMO); alternate cross-link. At serine 9 the chain carries Phosphoserine. The residue at position 10 (lysine 10) is an N6-acetyllysine. Position 15 is an N6-acetyllysine; alternate (lysine 15). Residue lysine 15 forms a Glycyl lysine isopeptide (Lys-Gly) (interchain with G-Cter in SUMO); alternate linkage. Lysine 16 is covalently cross-linked (Glycyl lysine isopeptide (Lys-Gly) (interchain with G-Cter in SUMO)). A Glycyl lysine isopeptide (Lys-Gly) (interchain with G-Cter in ubiquitin) cross-link involves residue lysine 122.

It belongs to the histone H2B family. As to quaternary structure, the nucleosome is a histone octamer containing two molecules each of H2A, H2B, H3 and H4 assembled in one H3-H4 heterotetramer and two H2A-H2B heterodimers. The octamer wraps approximately 147 bp of DNA. Post-translationally, monoubiquitinated by the UBC2-BRE1 complex to form H2BK123ub1. H2BK123ub1 gives a specific tag for epigenetic transcriptional activation and is also prerequisite for H3K4me and H3K79me formation. H2BK123ub1 also modulates the formation of double-strand breaks during meiosis and is a prerequisite for DNA-damage checkpoint activation. Phosphorylated by STE20 to form H2BS10ph during progression through meiotic prophase. May be correlated with chromosome condensation. In terms of processing, acetylated by GCN5 to form H2BK11ac and H2BK16ac. H2BK16ac can also be formed by ESA1. Acetylation of N-terminal lysines and particularly formation of H2BK11acK16ac has a positive effect on transcription. Post-translationally, sumoylation to form H2BK6su or H2BK7su, and probably also H2BK16su or H2BK17su, occurs preferentially near the telomeres and represses gene transcription.

The protein localises to the nucleus. It is found in the chromosome. Core component of nucleosome. Nucleosomes wrap and compact DNA into chromatin, limiting DNA accessibility to the cellular machineries which require DNA as a template. Histones thereby play a central role in transcription regulation, DNA repair, DNA replication and chromosomal stability. DNA accessibility is regulated via a complex set of post-translational modifications of histones, also called histone code, and nucleosome remodeling. This is Histone H2B.1 (HTB1) from Candida glabrata (strain ATCC 2001 / BCRC 20586 / JCM 3761 / NBRC 0622 / NRRL Y-65 / CBS 138) (Yeast).